A 94-amino-acid chain; its full sequence is Protein S100-A1 (94 aa).

Gly2 is subject to Blocked amino end (Gly). 2 consecutive EF-hand domains span residues 13 to 48 (INVF…FLDA) and 50 to 85 (KDAD…LTVA). Lys28, Glu33, Asp63, Asn65, Asp67, Glu69, and Glu74 together coordinate Ca(2+). Cys86 bears the S-nitrosocysteine mark.

Belongs to the S-100 family. In terms of assembly, dimer of either two alpha chains, or two beta chains, or one alpha and one beta chain. Also forms heterodimers with S100P. Interacts with AGER. Interacts with CAPZA1. Interacts with FKBP4. Interacts with RYR1 and RYR2. Interacts with CACYBP in a calcium-dependent manner. Interacts with PPP5C (via TPR repeats); the interaction is calcium-dependent and modulates PPP5C activity. Interacts with ATP2A2 and PLN in a Ca(2+)-dependent manner. Interacts with mitochondrial F1-ATPase subunits ATP5F1A and ATP5F1B; these interactions increase F1-ATPase activity. In terms of processing, glutathionylated; glutathionylation increases affinity to calcium about 10-fold. In terms of tissue distribution, although predominant among the water-soluble brain proteins, S100 is also found in a variety of other tissues.

The protein localises to the cytoplasm. Its subcellular location is the sarcoplasmic reticulum. It is found in the mitochondrion. Functionally, small calcium binding protein that plays important roles in several biological processes such as Ca(2+) homeostasis, chondrocyte biology and cardiomyocyte regulation. In response to an increase in intracellular Ca(2+) levels, binds calcium which triggers conformational changes. These changes allow interactions with specific target proteins and modulate their activity. Regulates a network in cardiomyocytes controlling sarcoplasmic reticulum Ca(2+) cycling and mitochondrial function through interaction with the ryanodine receptors RYR1 and RYR2, sarcoplasmic reticulum Ca(2+)-ATPase/ATP2A2 and mitochondrial F1-ATPase. Facilitates diastolic Ca(2+) dissociation and myofilament mechanics in order to improve relaxation during diastole. The protein is Protein S100-A1 (S100A1) of Bos taurus (Bovine).